The primary structure comprises 409 residues: NADH-quinone oxidoreductase subunit D (409 aa).

Belongs to the complex I 49 kDa subunit family. As to quaternary structure, NDH-1 is composed of 14 different subunits. Subunits NuoB, C, D, E, F, and G constitute the peripheral sector of the complex.

Its subcellular location is the cell inner membrane. It carries out the reaction a quinone + NADH + 5 H(+)(in) = a quinol + NAD(+) + 4 H(+)(out). Functionally, NDH-1 shuttles electrons from NADH, via FMN and iron-sulfur (Fe-S) centers, to quinones in the respiratory chain. The immediate electron acceptor for the enzyme in this species is believed to be ubiquinone. Couples the redox reaction to proton translocation (for every two electrons transferred, four hydrogen ions are translocated across the cytoplasmic membrane), and thus conserves the redox energy in a proton gradient. The polypeptide is NADH-quinone oxidoreductase subunit D (Helicobacter acinonychis (strain Sheeba)).